Here is a 105-residue protein sequence, read N- to C-terminus: Small ribosomal subunit protein bS6 (105 aa).

Belongs to the bacterial ribosomal protein bS6 family.

In terms of biological role, binds together with bS18 to 16S ribosomal RNA. The sequence is that of Small ribosomal subunit protein bS6 from Lawsonia intracellularis (strain PHE/MN1-00).